The chain runs to 202 residues: uncharacterized protein (202 aa).

Residues 1 to 78 (MKLVGSYTSP…YIELMNVAPA (78 aa)) enclose the GST N-terminal domain. Residues Ser-9, Val-49, and 62-63 (DS) contribute to the glutathione site. In terms of domain architecture, GST C-terminal spans 83–202 (DPLESLRVRK…SFARTEPPKA (120 aa)).

Belongs to the GST superfamily. HSP26 family.

Its function is as follows. Glutathione (GSH) transferase homolog, that might be involved in selenium metabolism. This is an uncharacterized protein from Escherichia coli (strain K12).